Here is a 142-residue protein sequence, read N- to C-terminus: gSG7 salivary protein (142 aa).

A signal peptide spans 1–25; sequence METKLVLALIACGVICLLQTTPTEA. 2 disulfide bridges follow: Cys83–Cys138 and Cys106–Cys116.

Interacts with host coagulation factor XII (F12) (inactive and activated). Interacts with host high molecular weight kininogen (KNG1) (inactive and activated).

The protein resides in the secreted. Its activity is regulated as follows. Zn(2+) modulates binding to host coagulation factor XII (F12) and high molecular weight kininogen (KNG1). Functionally, salivary protein with anticoagulant activity. Inhibits activation of host kallikrein-kinin system by preventing the reciprocal activation of coagulation factor XII (F12) and prekallikrein (KLKB1), and subsequent release of bradykinin. Inhibits host factor XII and high molecular weight kininogen (KNG1) binding to negatively charged surfaces. Weakly inhibits the alternative pathway of complement system activation in the host. The chain is gSG7 salivary protein from Anopheles stephensi (Indo-Pakistan malaria mosquito).